Consider the following 348-residue polypeptide: D-alanine--D-alanine ligase (348 aa).

The region spanning 132-334 is the ATP-grasp domain; it reads KRILEVAGVP…YSDLIKELVV (203 aa). 162-217 contacts ATP; it reads LEKLTFPVFVKPANMGSSVGISKAENESELRSAIDLALKYDSRILIEQGVVAREIE. 3 residues coordinate Mg(2+): aspartate 288, glutamate 301, and asparagine 303.

This sequence belongs to the D-alanine--D-alanine ligase family. Requires Mg(2+) as cofactor. Mn(2+) serves as cofactor.

Its subcellular location is the cytoplasm. The enzyme catalyses 2 D-alanine + ATP = D-alanyl-D-alanine + ADP + phosphate + H(+). It participates in cell wall biogenesis; peptidoglycan biosynthesis. Functionally, cell wall formation. The polypeptide is D-alanine--D-alanine ligase (Streptococcus thermophilus (strain ATCC BAA-250 / LMG 18311)).